We begin with the raw amino-acid sequence, 694 residues long: PTS system fructose-specific EIIABC component (694 aa).

A PTS EIIA type-2 domain is found at 4–149; that stretch reads PLLSAELFFN…NGLINLIDSF (146 aa). H68 functions as the Tele-phosphohistidine intermediate; for EIIA activity in the catalytic mechanism. At H68 the chain carries Phosphohistidine; by HPr. A PTS EIIB type-2 domain is found at 179–275; sequence FVAVTACPTG…PQTVYDQVVK (97 aa). Catalysis depends on C185, which acts as the Phosphocysteine intermediate; for EIIB activity. A Phosphocysteine; by EIIA modification is found at C185. The 378-residue stretch at 310 to 687 folds into the PTS EIIC type-2 domain; the sequence is IYRAILSGVS…NLLVVRKKTK (378 aa). The next 10 membrane-spanning stretches (helical) occupy residues 318 to 338, 364 to 384, 390 to 410, 422 to 442, 461 to 481, 502 to 522, 542 to 562, 576 to 596, 602 to 622, and 655 to 675; these read VSYMLPFVVFGGILIAIAFLI, GGLSFGLIVPILSAYIAFALV, LPGFIVGLISAGKFLLNIDIV, VSSGFFGAIFGGLLAAVLIIV, ILFIPLLGTLVTAALFWVINI, LAPLLGLVIGLMMCFDLGGPV, VAMASAILSGMVPPLGIAIAA, AAYACYVMGLSFISEGAIPFV, IMLAANLIGGAVCGVLTGAFA, and GVGLALLALIVSSFISAGIII.

The protein resides in the cell membrane. It carries out the reaction D-fructose(out) + N(pros)-phospho-L-histidyl-[protein] = D-fructose 1-phosphate(in) + L-histidyl-[protein]. The phosphoenolpyruvate-dependent sugar phosphotransferase system (sugar PTS), a major carbohydrate active transport system, catalyzes the phosphorylation of incoming sugar substrates concomitantly with their translocation across the cell membrane. This system is involved in fructose transport. This chain is PTS system fructose-specific EIIABC component, found in Mycoplasma pneumoniae (strain ATCC 29342 / M129 / Subtype 1) (Mycoplasmoides pneumoniae).